The primary structure comprises 269 residues: Protein IAL1 (269 aa).

In terms of domain architecture, LOB spans 32–133 (SPCAACKFLR…QDLARAKYEL (102 aa)).

It belongs to the LOB domain-containing protein family. Expressed in leaves, leaf primordia, immature ears, immature tassels, whole ovules, silk and husk leaves.

The protein localises to the nucleus. In Zea mays (Maize), this protein is Protein IAL1.